The primary structure comprises 946 residues: Bifunctional glutamine synthetase adenylyltransferase/adenylyl-removing enzyme (946 aa).

The interval 1–440 (MKPLSSPLQQ…VFNELIGDDE (440 aa)) is adenylyl removase. The interval 449-946 (SEQWRELWQD…ASWQKWLVEE (498 aa)) is adenylyl transferase.

The protein belongs to the GlnE family. Mg(2+) is required as a cofactor.

It carries out the reaction [glutamine synthetase]-O(4)-(5'-adenylyl)-L-tyrosine + phosphate = [glutamine synthetase]-L-tyrosine + ADP. It catalyses the reaction [glutamine synthetase]-L-tyrosine + ATP = [glutamine synthetase]-O(4)-(5'-adenylyl)-L-tyrosine + diphosphate. Functionally, involved in the regulation of glutamine synthetase GlnA, a key enzyme in the process to assimilate ammonia. When cellular nitrogen levels are high, the C-terminal adenylyl transferase (AT) inactivates GlnA by covalent transfer of an adenylyl group from ATP to specific tyrosine residue of GlnA, thus reducing its activity. Conversely, when nitrogen levels are low, the N-terminal adenylyl removase (AR) activates GlnA by removing the adenylyl group by phosphorolysis, increasing its activity. The regulatory region of GlnE binds the signal transduction protein PII (GlnB) which indicates the nitrogen status of the cell. The sequence is that of Bifunctional glutamine synthetase adenylyltransferase/adenylyl-removing enzyme from Escherichia coli O9:H4 (strain HS).